The chain runs to 92 residues: Small ribosomal subunit protein uS17 (92 aa).

Belongs to the universal ribosomal protein uS17 family. Part of the 30S ribosomal subunit.

Its function is as follows. One of the primary rRNA binding proteins, it binds specifically to the 5'-end of 16S ribosomal RNA. This Corynebacterium diphtheriae (strain ATCC 700971 / NCTC 13129 / Biotype gravis) protein is Small ribosomal subunit protein uS17.